Here is a 198-residue protein sequence, read N- to C-terminus: Adenylate kinase (198 aa).

10–15 (GAGKGT) is a binding site for ATP. The tract at residues 30–59 (STGDMLRAAVQAGSEVGKRAKAVMDAGELV) is NMP. AMP-binding positions include Thr31, Arg36, 57–59 (ELV), 85–88 (GYPR), and Gln92. Positions 126 to 142 (KRAEDAKAAGQPVRKDD) are LID. Arg127 is an ATP binding site. The AMP site is built by Arg139 and Arg150. An ATP-binding site is contributed by Ala178.

The protein belongs to the adenylate kinase family. In terms of assembly, monomer.

It localises to the cytoplasm. It carries out the reaction AMP + ATP = 2 ADP. Its pathway is purine metabolism; AMP biosynthesis via salvage pathway; AMP from ADP: step 1/1. Functionally, catalyzes the reversible transfer of the terminal phosphate group between ATP and AMP. Plays an important role in cellular energy homeostasis and in adenine nucleotide metabolism. This Mesorhizobium japonicum (strain LMG 29417 / CECT 9101 / MAFF 303099) (Mesorhizobium loti (strain MAFF 303099)) protein is Adenylate kinase.